The primary structure comprises 345 residues: Probable dual-specificity RNA methyltransferase RlmN (345 aa).

Glu90 (proton acceptor) is an active-site residue. The Radical SAM core domain occupies 96-326; sequence YDYGNSICIS…STIRKEMGAD (231 aa). Cys103 and Cys331 are disulfide-bonded. [4Fe-4S] cluster is bound by residues Cys110, Cys114, and Cys117. S-adenosyl-L-methionine is bound by residues 157–158, Ser189, 212–214, and Asn288; these read GE and SLH. Cys331 serves as the catalytic S-methylcysteine intermediate.

It belongs to the radical SAM superfamily. RlmN family. The cofactor is [4Fe-4S] cluster.

Its subcellular location is the cytoplasm. The catalysed reaction is adenosine(2503) in 23S rRNA + 2 reduced [2Fe-2S]-[ferredoxin] + 2 S-adenosyl-L-methionine = 2-methyladenosine(2503) in 23S rRNA + 5'-deoxyadenosine + L-methionine + 2 oxidized [2Fe-2S]-[ferredoxin] + S-adenosyl-L-homocysteine. It catalyses the reaction adenosine(37) in tRNA + 2 reduced [2Fe-2S]-[ferredoxin] + 2 S-adenosyl-L-methionine = 2-methyladenosine(37) in tRNA + 5'-deoxyadenosine + L-methionine + 2 oxidized [2Fe-2S]-[ferredoxin] + S-adenosyl-L-homocysteine. Functionally, specifically methylates position 2 of adenine 2503 in 23S rRNA and position 2 of adenine 37 in tRNAs. The protein is Probable dual-specificity RNA methyltransferase RlmN of Clostridium acetobutylicum (strain ATCC 824 / DSM 792 / JCM 1419 / IAM 19013 / LMG 5710 / NBRC 13948 / NRRL B-527 / VKM B-1787 / 2291 / W).